We begin with the raw amino-acid sequence, 191 residues long: Protein YceI (191 aa).

The N-terminal stretch at 1-22 is a signal peptide; that stretch reads MKKSLLGLTFASLMFSAGSAVA.

The protein belongs to the UPF0312 family. Type 1 subfamily.

The protein localises to the periplasm. This Shigella boydii serotype 4 (strain Sb227) protein is Protein YceI.